Reading from the N-terminus, the 100-residue chain is Urease subunit gamma (100 aa).

This sequence belongs to the urease gamma subunit family. In terms of assembly, heterotrimer of UreA (gamma), UreB (beta) and UreC (alpha) subunits. Three heterotrimers associate to form the active enzyme.

The protein localises to the cytoplasm. It catalyses the reaction urea + 2 H2O + H(+) = hydrogencarbonate + 2 NH4(+). The protein operates within nitrogen metabolism; urea degradation; CO(2) and NH(3) from urea (urease route): step 1/1. The protein is Urease subunit gamma of Sinorhizobium fredii (strain NBRC 101917 / NGR234).